The following is a 416-amino-acid chain: MFKLAQRLPKSVSSLGSQLSKNAPNQLAAATTSQLINTPGIRHKSRSSAVPSSLSKSMYDHNEEMKAAMKYMDEIYPEVMGQIEKVPQYEEIKPILVRLREAIDYTVPYGKRFKGVHIVSHFKLLADPKFITPENVKLSGVLGWCAEIIQAYFCMLDDIMDDSDTRRGKPTWYKLPGIGLNAVTDVCLMEMFTFELLKRYFPKHPSYADIHEILRNLLFLTHMGQGYDFTFIDPVTRKINFNDFTEENYTKLCRYKIIFSTFHNTLELTSAMANVYDPKKIKQLDPVLMRIGMMHQSQNDFKDLYRDQGEVLKQAEKSVLGTDIKTGQLTWFAQKALSICNDRQRKIIMDNYGKEDNKNSEAVREVYEELDLKGKFMEFEEESFEWLKKEIPKINNGIPHKVFQDYTYGVFKRRPE.

Residues D157 and D161 each coordinate Mg(2+). The short motif at 157 to 161 (DDIMD) is the DDXXD motif element.

This sequence belongs to the FPP/GGPP synthase family. It depends on Mg(2+) as a cofactor. Specifically expressed in the anterior midgut of male beetles, the site of aggregation pheromone biosynthesis.

It catalyses the reaction isopentenyl diphosphate + dimethylallyl diphosphate = (2E)-geranyl diphosphate + diphosphate. It functions in the pathway pheromone biosynthesis. Functionally, geranyl diphosphate synthase involved in pheromone biosynthesis. In Ips pini (Pine engraver beetle), this protein is Geranyl diphosphate synthase.